The primary structure comprises 299 residues: Somaliensene A/B synthase (299 aa).

The next 7 helical transmembrane spans lie at 32–49, 56–72, 110–132, 153–171, 177–194, 222–241, and 247–269; these read WTTL…AVHT, TAVA…LFVY, IAVR…ALLW, LYAG…EIVA, AWRW…LMSV, VFLC…FLMA, and WWIV…RVVL.

This sequence belongs to the UbiA prenyltransferase family. Mg(2+) serves as cofactor.

It is found in the cell membrane. It carries out the reaction (2E,6E,10E,14E)-geranylfarnesyl diphosphate = somaliensene A + diphosphate. The enzyme catalyses (2E,6E,10E,14E)-geranylfarnesyl diphosphate = (-)-somaliensene B + diphosphate. It participates in secondary metabolite biosynthesis; terpenoid biosynthesis. Its function is as follows. Sesterterpene cyclase, which converts geranylfarnesyl diphosphate (GFPP) into the terpenes somaliensene A and somaliensene B. The sequence is that of Somaliensene A/B synthase from Streptomyces somaliensis (strain ATCC 33201 / DSM 40738 / JCM 12659 / KCTC 9044 / NCTC 11332 / NRRL B-12077 / IP 733).